A 594-amino-acid chain; its full sequence is Glutamate decarboxylase 1 (594 aa).

Residues 1–13 (MASSTPSSSATSS) are compositionally biased toward low complexity. Residues 1-22 (MASSTPSSSATSSNAGADPNTA) are disordered. Ser-78 bears the Phosphoserine mark. Residue 190 to 192 (QLS) coordinates 4-aminobutanoate. Lys-405 carries the post-translational modification N6-(pyridoxal phosphate)lysine. A 4-aminobutanoate-binding site is contributed by Arg-567.

The protein belongs to the group II decarboxylase family. As to quaternary structure, homodimer. Pyridoxal 5'-phosphate serves as cofactor.

The enzyme catalyses L-glutamate + H(+) = 4-aminobutanoate + CO2. Catalyzes the synthesis of the inhibitory neurotransmitter gamma-aminobutyric acid (GABA) with pyridoxal 5'-phosphate as cofactor. The sequence is that of Glutamate decarboxylase 1 (GAD1) from Canis lupus familiaris (Dog).